The primary structure comprises 265 residues: uncharacterized protein (265 aa).

Residues 143 to 205 (ATQKALKDSI…EKLIKSVEKA (63 aa)) are a coiled coil.

This is an uncharacterized protein from Aquifex aeolicus (strain VF5).